The primary structure comprises 120 residues: Urease subunit beta (120 aa).

It belongs to the urease beta subunit family. Heterotrimer of UreA (gamma), UreB (beta) and UreC (alpha) subunits. Three heterotrimers associate to form the active enzyme.

The protein localises to the cytoplasm. The catalysed reaction is urea + 2 H2O + H(+) = hydrogencarbonate + 2 NH4(+). The protein operates within nitrogen metabolism; urea degradation; CO(2) and NH(3) from urea (urease route): step 1/1. This chain is Urease subunit beta, found in Corynebacterium efficiens (strain DSM 44549 / YS-314 / AJ 12310 / JCM 11189 / NBRC 100395).